Reading from the N-terminus, the 174-residue chain is Co-chaperone protein HscB homolog (174 aa).

The 73-residue stretch at 2–74 folds into the J domain; it reads NYFELFNLPV…IRRAEHMLAL (73 aa).

It belongs to the HscB family. In terms of assembly, interacts with HscA and stimulates its ATPase activity.

Co-chaperone involved in the maturation of iron-sulfur cluster-containing proteins. Seems to help targeting proteins to be folded toward HscA. The polypeptide is Co-chaperone protein HscB homolog (Shewanella amazonensis (strain ATCC BAA-1098 / SB2B)).